Reading from the N-terminus, the 174-residue chain is Anthrone oxygenase CPUR_05435 (174 aa).

4 helical membrane-spanning segments follow: residues 13 to 33 (VALA…AIMI), 56 to 76 (YGSV…GFAS), 88 to 108 (CLAA…AMIP), and 140 to 160 (WVVL…MGFT).

Belongs to the anthrone oxygenase family.

The protein localises to the membrane. The enzyme catalyses emodin anthrone + O2 = emodin + H2O + H(+). In terms of biological role, anthrone oxygenase; part of the ergochrome gene cluster responsible for the typical purple-black color of the ergot sclerotia. The ergochrome gene cluster produces several ergot pigments including the yellow ergochrome secalonic acid and its derivatives, as well as the red anthraquinones endocrocin and clavorubin. The pathway begins with the synthesis of atrochrysone thioester by the polyketide synthase (PKS) CPUR_05437. The atrochrysone carboxyl ACP thioesterase CPUR_05436 then breaks the thioester bond and releases the atrochrysone carboxylic acid from CPUR_05437. The decarboxylase CPUR_05434 then catalyzes the concerted decarboxylation-elimination required to convert atochrysone carboxylic acid into emodin anthrone, which is further oxidized to emodin by the anthrone oxygenase CPUR_05435. Emodin is further modified to yield monodictyphenone via several steps involving CPUR_05427, CPUR_05428, CPUR_05429 and CPUR_05430. The short chain dehydrogenase/reductase CPUR_05418 then catalyzes the C-5 ketoreduction to give the xanthone skeleton of the monomeric units. Ergochromes formation requires further dimerization steps of different xanthone units, probably catalyzed by the cytochrome P450 monooxygenase CPUR_05419. CPUR_05425, CPUR_05426 and CPUR_05431 are unique to Claviceps, thus it is likely that they are involved in further modification of xanthone units or in their dimerization. The yellow ergochromes and the red anthraquinone pigments endocrocin and clavorubin are products from the same PKS derived precursors and the latter are likely shunt products in the pathway of xanthone biosynthesis. It is proposed that atrochrysone carboxylic acid released from the PKS CPUR_05437 can also be converted to endocrocin anthrone which is further oxidized into endocrocin by CPUR_05435. Endocrocin could be then modified to clavorubin, possibly by CPUR_05423 and CPUR_05431. Clavorubin is the principal anthraquinone metabolite produced by the cluster with a much higher yield compared to endocrocin. This chain is Anthrone oxygenase CPUR_05435, found in Claviceps purpurea (strain 20.1) (Ergot fungus).